The following is a 429-amino-acid chain: Aspartate--tRNA(Asp/Asn) ligase (429 aa).

E166 serves as a coordination point for L-aspartate. The aspartate stretch occupies residues 188–191 (QLYK). R210 is an L-aspartate binding site. Residues 210–212 (RAE), 218–220 (RHL), and E352 each bind ATP. Mg(2+)-binding residues include E352 and S355. The L-aspartate site is built by S355 and R359. Residue 400 to 403 (GIER) participates in ATP binding.

Belongs to the class-II aminoacyl-tRNA synthetase family. Type 2 subfamily. In terms of assembly, homodimer. Mg(2+) is required as a cofactor.

It localises to the cytoplasm. The enzyme catalyses tRNA(Asx) + L-aspartate + ATP = L-aspartyl-tRNA(Asx) + AMP + diphosphate. Functionally, aspartyl-tRNA synthetase with relaxed tRNA specificity since it is able to aspartylate not only its cognate tRNA(Asp) but also tRNA(Asn). Reaction proceeds in two steps: L-aspartate is first activated by ATP to form Asp-AMP and then transferred to the acceptor end of tRNA(Asp/Asn). The protein is Aspartate--tRNA(Asp/Asn) ligase of Methanoculleus marisnigri (strain ATCC 35101 / DSM 1498 / JR1).